The following is a 309-amino-acid chain: Homoserine O-succinyltransferase (309 aa).

Catalysis depends on Cys142, which acts as the Acyl-thioester intermediate. Lys163 and Ser192 together coordinate substrate. The active-site Proton acceptor is the His235. Glu237 is an active-site residue. Arg249 provides a ligand contact to substrate.

It belongs to the MetA family. As to quaternary structure, homodimer.

The protein localises to the cytoplasm. It catalyses the reaction L-homoserine + succinyl-CoA = O-succinyl-L-homoserine + CoA. It participates in amino-acid biosynthesis; L-methionine biosynthesis via de novo pathway; O-succinyl-L-homoserine from L-homoserine: step 1/1. Functionally, transfers a succinyl group from succinyl-CoA to L-homoserine, forming succinyl-L-homoserine. In Salmonella arizonae (strain ATCC BAA-731 / CDC346-86 / RSK2980), this protein is Homoserine O-succinyltransferase.